The following is an 84-amino-acid chain: Acyl carrier protein homolog (84 aa).

A Carrier domain is found at 4–79 (HEILLKIKEI…DLVLEVKNLL (76 aa)). Residue Ser39 is modified to O-(pantetheine 4'-phosphoryl)serine.

Post-translationally, 4'-phosphopantetheine is transferred from CoA to a specific serine of the apo-ACP-like protein.

Its pathway is lipid metabolism; fatty acid biosynthesis. Carrier of the growing fatty acid chain in fatty acid biosynthesis. In Mycoplasma genitalium (strain ATCC 33530 / DSM 19775 / NCTC 10195 / G37) (Mycoplasmoides genitalium), this protein is Acyl carrier protein homolog.